We begin with the raw amino-acid sequence, 506 residues long: Chaperone SurA (506 aa).

Residues 1–29 (MMRRLHSSRRFSGSLLALALGLALPLAHA) form the signal peptide. PpiC domains follow at residues 219-320 (PVML…KVLQ) and 351-450 (VTQT…QVLE).

Its subcellular location is the periplasm. The enzyme catalyses [protein]-peptidylproline (omega=180) = [protein]-peptidylproline (omega=0). In terms of biological role, chaperone involved in the correct folding and assembly of outer membrane proteins. Recognizes specific patterns of aromatic residues and the orientation of their side chains, which are found more frequently in integral outer membrane proteins. May act in both early periplasmic and late outer membrane-associated steps of protein maturation. The sequence is that of Chaperone SurA from Bordetella avium (strain 197N).